Consider the following 123-residue polypeptide: Small ribosomal subunit protein uS12 (123 aa).

D89 is subject to 3-methylthioaspartic acid.

This sequence belongs to the universal ribosomal protein uS12 family. In terms of assembly, part of the 30S ribosomal subunit. Contacts proteins S8 and S17. May interact with IF1 in the 30S initiation complex.

Functionally, with S4 and S5 plays an important role in translational accuracy. Its function is as follows. Interacts with and stabilizes bases of the 16S rRNA that are involved in tRNA selection in the A site and with the mRNA backbone. Located at the interface of the 30S and 50S subunits, it traverses the body of the 30S subunit contacting proteins on the other side and probably holding the rRNA structure together. The combined cluster of proteins S8, S12 and S17 appears to hold together the shoulder and platform of the 30S subunit. The chain is Small ribosomal subunit protein uS12 from Methylobacterium radiotolerans (strain ATCC 27329 / DSM 1819 / JCM 2831 / NBRC 15690 / NCIMB 10815 / 0-1).